The following is a 64-amino-acid chain: Phi-buthitoxin-Hj1a (64 aa).

A signal peptide spans 1–18 (MNSFVVVLLLFIAILCNA). 3 disulfide bridges follow: cysteine 29-cysteine 43, cysteine 36-cysteine 49, and cysteine 42-cysteine 58.

It belongs to the scorpion calcin-like family. In terms of tissue distribution, expressed by the venom gland.

The protein localises to the secreted. Functionally, may increase intracellular calcium release through the activation of nuclear inositol 1,4,5-trisphosphate receptors (ITPR) of cardiomyocytes, thereby causing an increase in the contraction frequency of these cells. This Hottentotta judaicus (Black scorpion) protein is Phi-buthitoxin-Hj1a.